The primary structure comprises 395 residues: Serine/threonine-protein kinase BIK1 (395 aa).

Gly-2 carries N-myristoyl glycine lipidation. Cys-4 carries S-palmitoyl cysteine lipidation. Ser-26 carries the phosphoserine modification. Residue Lys-31 forms a Glycyl lysine isopeptide (Lys-Gly) (interchain with G-Cter in ubiquitin) linkage. Ser-32, Ser-33, and Ser-34 each carry phosphoserine. Residue Thr-35 is modified to Phosphothreonine. A Glycyl lysine isopeptide (Lys-Gly) (interchain with G-Cter in ubiquitin) cross-link involves residue Lys-41. Thr-42 carries the phosphothreonine modification. At Ser-48 the chain carries Phosphoserine; by autocatalysis and BAK1. At Thr-50 the chain carries Phosphothreonine. Position 54 is a phosphoserine; by autocatalysis (Ser-54). Residue Thr-56 is modified to Phosphothreonine; by autocatalysis. Thr-64 carries the phosphothreonine modification. The Protein kinase domain occupies 67 to 356; that stretch reads FRPDSVIGEG…RALQQLQDNL (290 aa). Position 71 is a phosphoserine; by autocatalysis and BAK1 (Ser-71). 73-81 contacts ATP; the sequence is IGEGGFGCV. A Phosphoserine; by EFR modification is found at Ser-89. Residues 89–90 carry the Required for physical interaction with and phosphorylation of downstream signaling proteins (e.g. WRKY33, WRKY50, WRKY51 and WRKY57) to activate EFR-mediated immune signaling motif; the sequence is ST. Thr-90 is subject to Phosphothreonine; by EFR. A Glycyl lysine isopeptide (Lys-Gly) (interchain with G-Cter in ubiquitin) cross-link involves residue Lys-95. Lys-105 contacts ATP. Phosphothreonine; by EFR is present on Thr-120. A Phosphoserine; by autocatalysis modification is found at Ser-129. A Phosphoserine; by EFR modification is found at Ser-129. A Phosphotyrosine modification is found at Tyr-150. Residue Tyr-168 is modified to Phosphotyrosine; by autocatalysis. Glycyl lysine isopeptide (Lys-Gly) (interchain with G-Cter in ubiquitin) cross-links involve residues Lys-170 and Lys-186. A Phosphoserine modification is found at Ser-193. Asp-202 serves as the catalytic Proton acceptor. Ser-206 carries the post-translational modification Phosphoserine; by autocatalysis and BAK1. Tyr-214 is modified (phosphotyrosine; by autocatalysis). Ser-219 is subject to Phosphoserine. Ser-233 is subject to Phosphoserine; by autocatalysis. At Ser-236 the chain carries O-UMP-serine; by Xanthomonas campestris effector XopAC/AvrAC; alternate. A Phosphoserine; by autocatalysis and BAK1; alternate modification is found at Ser-236. Thr-237 is subject to O-UMP-threonine; by Xanthomonas campestris effector XopAC/AvrAC; alternate. Thr-237 is subject to Phosphothreonine; by autocatalysis and BAK1; alternate. The residue at position 242 (Thr-242) is a Phosphothreonine; by autocatalysis and BAK1. Tyr-243 is subject to Phosphotyrosine. A Phosphotyrosine; by autocatalysis modification is found at Tyr-250. Phosphoserine; by autocatalysis occurs at positions 252 and 253. A Glycyl lysine isopeptide (Lys-Gly) (interchain with G-Cter in ubiquitin) cross-link involves residue Lys-286. The residue at position 314 (Thr-314) is a Phosphothreonine; by autocatalysis. Residue Lys-337 forms a Glycyl lysine isopeptide (Lys-Gly) (interchain with G-Cter in ubiquitin) linkage. Thr-341 is modified (phosphothreonine). A compositionally biased stretch (polar residues) spans 354-365; sequence DNLGKPSQTNPV. The tract at residues 354-395 is disordered; that stretch reads DNLGKPSQTNPVKDTKKLGFKTGTTKSSEKRFTQKPFGRHLV. Lys-358 is covalently cross-linked (Glycyl lysine isopeptide (Lys-Gly) (interchain with G-Cter in ubiquitin)). A Phosphoserine; by autocatalysis and BAK1 modification is found at Ser-360. Residue Thr-362 is modified to Phosphothreonine; by autocatalysis and BAK1. Lys-366 is covalently cross-linked (Glycyl lysine isopeptide (Lys-Gly) (interchain with G-Cter in ubiquitin)). Thr-368 carries the phosphothreonine; by autocatalysis and BAK1 modification. Residues Thr-375 and Thr-377 each carry the phosphothreonine modification.

This sequence belongs to the protein kinase superfamily. Ser/Thr protein kinase family. In terms of assembly, interacts with FLS2. Activation of FLS2 by flagellin (flg22) induces the dissociation of the complex. Interacts with BAK1. Interacts with the Xanthomonas campestris effector XopAC/AvrAC. Interacts with CPK28. Interacts with PEPR1. Interacts with PP2C38. Interacts with BRI1. Interacts with RBOHD. Binds to EFR when not phosphorylated at Ser-89 and Thr-90, in the absence of pathogen elicitor; dissociates upon pathogen-associated molecular pattern (PAMP)-triggered activation by EFR-mediated phosphorylation. Interacts directly with and phosphorylates WRKY transcription factors in the nucleus involved in the jasmonic acid (JA) and salicylic acid (SA) regulation (e.g. WRKY33, WRKY50, WRKY51 and WRKY57) to modulate defense hormones during plant immunity. Binds to ATL44/RHA3A and ATL45/RHA3B. Binds to SIK1 to be phosphorylated and stabilized. Phosphorylated by SIK1 to be stabilized. Phosphorylated by FLS2 and BAK1. Autophosphorylated. Autophosphorylation is reduced in presence of the Xanthomonas campestris effector XopAC/AvrAC. Phosphorylated, especially by EFR at Ser-89 and Thr-90, in response to the microbe-associated molecular pattern (MAMP) flg22. Phosphorylation in response to flg22 is abolished in presence of the Xanthomonas campestris effector XopAC/AvrAC. Phosphorylated at Ser-233, Ser-236 and Thr-237 by PEPR1. Phosphorylated at Tyr-150, Tyr-243 and Tyr-250. Tyrosine phosphorylation is required for BIK1 function in plant innate immunity. In terms of processing, uridylylated at Ser-236 and Thr-237 by the Xanthomonas campestris effector XopAC/AvrAC. This conceals conserved phosphorylation sites in the activation loop, reducing BIK1 kinase activity and consequently inhibiting downstream signaling. Post-translationally, monoubiquitinated by ATL44/RHA3A and ATL45/RHA3B following phosphorylation upon the recognition of microbe-associated molecular patterns (MAMPs, e.g. flg22) by pattern recognition receptors (PRRs), then released from the FLS2/BAK1 complex and internalized dynamically into endocytic compartments followed by the activation of immune signaling.

It localises to the cell membrane. Its subcellular location is the endosome membrane. The protein resides in the nucleus. The enzyme catalyses L-seryl-[protein] + ATP = O-phospho-L-seryl-[protein] + ADP + H(+). It carries out the reaction L-threonyl-[protein] + ATP = O-phospho-L-threonyl-[protein] + ADP + H(+). With respect to regulation, kinase activation is repressed by the phosphatase PP2C38. Functionally, plays a central role in immune responses. Required to activate the resistance responses to necrotrophic pathogens, including the regulation of defense hormone expression (e.g. jasmonic acid (JA) and salicylic acid (SA)). Phosphorylates FLS2 and BAK1. Involved in pathogen-associated molecular pattern (PAMP)-triggered immunity (PTI) signaling, including calcium signaling, and defense responses downstream of FLS2; upon PAMP recognition, first phosphorylated by FLS2 and SIK1 prior to being monoubiquitinated by ATL44/RHA3A and ATL45/RHA3B at the plasma membrane, then internalized dynamically into endocytic compartments together with FLS2. Acts additively with PBL1 in PTI defenses. Acts as a positive regulator of the PAMP flg22-induced increase of cytosolic calcium. Upon flg22 perception, phosphorylates and activates the calcium-permeable channel OSCA1.3, promoting stomatal closure. Phosphorylates the NADPH oxidase RBOHD at specific sites in a calcium-independent manner to enhance reactive oxygen species (ROS) generation upon flg22 perception. ROS production in response to flg22 controls stomatal movement and restriction of bacterial entry into leaf tissues. Seems not required for flg22-induced MAPK activation. Required for Pep1-induced defenses. Pep1 is an endogenous elicitor that potentiates PAMP-inducible plant responses. In association with PEPR1, acts downstream of the canonical ethylene signaling cascade to regulate ethylene responses. Involved in ethylene signaling. Destabilizes EIN3, the key transcription activator in ethylene signaling, and represses EIN3-dependent transcription. Acts as a negative regulator in brassinosteroid (BR) signaling. Functions in BR signaling by direct interaction with the BR receptor BRI1 cytosolic kinase domain. Required during SCOOP small peptides (e.g. SCOOP10 and SCOOP12) perception and signaling; receptor-like cytosolic kinases (RLCK) activated by BAK1/SERK3 and SERK4 coreceptors when associated with MIK2 upon the perception of SCOOP peptides. Its function is as follows. (Microbial infection) Xanthomonas campestris effector AvrAC/XopAC-mediated uridylylation prevents activation by phosphorylation at the same residues, thus affecting immune responses and reducing defense responses toward X.campestris, mediating avrAC/XopAC virulence functions. In Arabidopsis thaliana (Mouse-ear cress), this protein is Serine/threonine-protein kinase BIK1.